Here is a 463-residue protein sequence, read N- to C-terminus: Cysteine--tRNA ligase (463 aa).

Zn(2+) is bound at residue cysteine 28. Positions 30 to 40 match the 'HIGH' region motif; that stretch reads ITPYDLCHIGH. Residues cysteine 211, histidine 236, and glutamate 240 each coordinate Zn(2+). A 'KMSKS' region motif is present at residues 268 to 272; the sequence is KMSKS. Lysine 271 is an ATP binding site.

Belongs to the class-I aminoacyl-tRNA synthetase family. As to quaternary structure, monomer. The cofactor is Zn(2+).

It localises to the cytoplasm. The catalysed reaction is tRNA(Cys) + L-cysteine + ATP = L-cysteinyl-tRNA(Cys) + AMP + diphosphate. This Wigglesworthia glossinidia brevipalpis protein is Cysteine--tRNA ligase.